A 476-amino-acid chain; its full sequence is Argininosuccinate lyase (476 aa).

It belongs to the lyase 1 family. Argininosuccinate lyase subfamily.

It is found in the cytoplasm. It catalyses the reaction 2-(N(omega)-L-arginino)succinate = fumarate + L-arginine. It participates in amino-acid biosynthesis; L-arginine biosynthesis; L-arginine from L-ornithine and carbamoyl phosphate: step 3/3. The chain is Argininosuccinate lyase from Nitrosospira multiformis (strain ATCC 25196 / NCIMB 11849 / C 71).